We begin with the raw amino-acid sequence, 323 residues long: Cyclin-H (323 aa).

The segment at 296-323 (GYEDDGYISKKPKTEEDEWTDEDFGDSL) is disordered. The span at 310–323 (EEDEWTDEDFGDSL) shows a compositional bias: acidic residues.

It belongs to the cyclin family. Cyclin C subfamily. In terms of assembly, associates primarily with CDK7 and MAT1 to form the CAK complex. CAK can further associate with the core-TFIIH to form the TFIIH basal transcription factor.

The protein localises to the nucleus. Regulates CDK7, the catalytic subunit of the CDK-activating kinase (CAK) enzymatic complex. CAK activates the cyclin-associated kinases CDK1, CDK2, CDK4 and CDK6 by threonine phosphorylation. CAK complexed to the core-TFIIH basal transcription factor activates RNA polymerase II by serine phosphorylation of the repetitive C-terminal domain (CTD) of its large subunit (POLR2A), allowing its escape from the promoter and elongation of the transcripts. Involved in cell cycle control and in RNA transcription by RNA polymerase II. Its expression and activity are constant throughout the cell cycle. This Xenopus laevis (African clawed frog) protein is Cyclin-H (ccnh).